The sequence spans 529 residues: uncharacterized protein (529 aa).

Residues F354–L373 traverse the membrane as a helical segment.

Its subcellular location is the host membrane. This is an uncharacterized protein from Acidianus convivator (ATV).